We begin with the raw amino-acid sequence, 383 residues long: Photosynthetic reaction center cytochrome c subunit (383 aa).

Positions Met1–Gly22 are cleaved as a signal peptide. Cys23 carries the N-palmitoyl cysteine lipid modification. Residue Cys23 is the site of S-diacylglycerol cysteine attachment. Met94, Cys107, Cys110, His111, Met130, His144, Cys152, Cys155, His156, Met236, Cys247, Cys250, His251, Cys307, Cys310, and His311 together coordinate heme. Residues Pro335–Leu383 form a disordered region.

Component of the photosynthetic reaction center composed of protein subunits L (PufL), M (PufM), H (PuhA) and cytochrome C (PufC). The reaction center interacts with light-harvesting antenna complex LH1. Post-translationally, binds 4 heme groups per subunit.

Its subcellular location is the cellular chromatophore membrane. In terms of biological role, the reaction center of purple bacteria contains a tightly bound cytochrome molecule which re-reduces the photo oxidized primary electron donor. The polypeptide is Photosynthetic reaction center cytochrome c subunit (pufC) (Allochromatium vinosum (strain ATCC 17899 / DSM 180 / NBRC 103801 / NCIMB 10441 / D) (Chromatium vinosum)).